The sequence spans 559 residues: MPEVKSDIEIARAARKQPIMEIGAKLGIPPEHLLPYGHDKAKVSAEFIAAQKTNGNGRLILVTAINPTPAGEGKTTTTVGLGDGLNRIGKKTIVCIREASLGPCFGIKGGAAGGGYAQVVPMEDINLHFTGDFHAITSAHNLLAALIDNHIYWGNEQAIDIRRIAWRRVMDMNDRALRQIIGSLGGVANGYPRETGFDITVASEVMAILCLAADIRDLEKRLGNIIIGYRRDKSPVYARDIKADGAMAVLLKDAMQPNLVQTLENNPAFVHGGPFANIAHGCNSVVATTTALKLADYVVTEAGFGADLGAEKFFDIKCRKAGLKPDAAVVVATVRAIKMNGGVKKDDLGKENLEALRKGCANLGRHVQNVKKFGVPVLVAINHFTSDTEAEIQAIKDYVRTLGSEAVLCRHWAEGSAGIEELAHKVVDLANAGHSQFSPLYPDDMPLFHKIETIAKDIYHASEVIADKLVRDQLRTWEDQGYGHLPICMAKTQYSFSTDPNLRGAPSGHAVPIREVRLAAGAGFVVVITGEIMTMPGLPKVPSSEKIRLNEAGYIEGLF.

ATP is bound at residue 68-75 (TPAGEGKT).

This sequence belongs to the formate--tetrahydrofolate ligase family.

The enzyme catalyses (6S)-5,6,7,8-tetrahydrofolate + formate + ATP = (6R)-10-formyltetrahydrofolate + ADP + phosphate. Its pathway is one-carbon metabolism; tetrahydrofolate interconversion. The polypeptide is Formate--tetrahydrofolate ligase (Sinorhizobium fredii (strain NBRC 101917 / NGR234)).